The sequence spans 427 residues: V-type proton ATPase subunit C 2 (427 aa).

Positions 292–319 are disordered; the sequence is HKVKVTPLGNPDRPAAGQTDRERESEGE.

Belongs to the V-ATPase C subunit family. In terms of assembly, V-ATPase is a heteromultimeric enzyme made up of two complexes: the ATP-hydrolytic V1 complex and the proton translocation V0 complex. The V1 complex consists of three catalytic AB heterodimers that form a heterohexamer, three peripheral stalks each consisting of EG heterodimers, one central rotor including subunits D and F, and the regulatory subunits C and H. The proton translocation complex V0 consists of the proton transport subunit a, a ring of proteolipid subunits c9c'', rotary subunit d, subunits e and f, and the accessory subunits ATP6AP1/Ac45 and ATP6AP2/PRR. As to expression, kidney and placenta.

In terms of biological role, subunit of the V1 complex of vacuolar(H+)-ATPase (V-ATPase), a multisubunit enzyme composed of a peripheral complex (V1) that hydrolyzes ATP and a membrane integral complex (V0) that translocates protons. V-ATPase is responsible for acidifying and maintaining the pH of intracellular compartments and in some cell types, is targeted to the plasma membrane, where it is responsible for acidifying the extracellular environment. Subunit C is necessary for the assembly of the catalytic sector of the enzyme and is likely to have a specific function in its catalytic activity. The polypeptide is V-type proton ATPase subunit C 2 (ATP6V1C2) (Homo sapiens (Human)).